Reading from the N-terminus, the 260-residue chain is Adenosylcobinamide-GDP ribazoletransferase (260 aa).

The next 7 helical transmembrane spans lie at 42–62 (TWAL…VYKI), 68–88 (LTPN…TGAL), 118–137 (IGTY…WSAL), 144–166 (WLVT…AFMS), 180–200 (AGAP…LVLT), 201–221 (LALG…AGLI), and 237–257 (ILGA…AAFQ).

This sequence belongs to the CobS family. Requires Mg(2+) as cofactor.

The protein localises to the cell inner membrane. The enzyme catalyses alpha-ribazole + adenosylcob(III)inamide-GDP = adenosylcob(III)alamin + GMP + H(+). The catalysed reaction is alpha-ribazole 5'-phosphate + adenosylcob(III)inamide-GDP = adenosylcob(III)alamin 5'-phosphate + GMP + H(+). Its pathway is cofactor biosynthesis; adenosylcobalamin biosynthesis; adenosylcobalamin from cob(II)yrinate a,c-diamide: step 7/7. Joins adenosylcobinamide-GDP and alpha-ribazole to generate adenosylcobalamin (Ado-cobalamin). Also synthesizes adenosylcobalamin 5'-phosphate from adenosylcobinamide-GDP and alpha-ribazole 5'-phosphate. The chain is Adenosylcobinamide-GDP ribazoletransferase from Bradyrhizobium diazoefficiens (strain JCM 10833 / BCRC 13528 / IAM 13628 / NBRC 14792 / USDA 110).